The following is an 852-amino-acid chain: Pentatricopeptide repeat-containing protein At5g02830, chloroplastic (852 aa).

Residues 1 to 25 (MRDFVIVFGSSSAITNPHHHHRRCY) constitute a chloroplast transit peptide. Residues 17 to 60 (PHHHHRRCYATAPESNRKTKSNSSFTKLLPSLPQQHSPSPASVS) are disordered. Residues 44-58 (LLPSLPQQHSPSPAS) show a composition bias toward low complexity. PPR repeat units lie at residues 334-364 (DMTSYNILLKTCCLAGRVDLAQDIYKEAKRM), 373-407 (DAFTYCTIIKVFADAKMWKWALKVKDDMKSVGVTP), 408-442 (NTHTWSSLISACANAGLVEQANHLFEEMLASGCEP), 443-477 (NSQCFNILLHACVEACQYDRAFRLFQSWKGSSVNE), 525-557 (TTATYNILLKACGTDYYRGKELMDEMKSLGLSP), 558-592 (NQITWSTLIDMCGGSGDVEGAVRILRTMHSAGTRP), 593-627 (DVVAYTTAIKICAENKCLKLAFSLFEEMRRYQIKP), and 628-665 (NWVTYNTLLKARSKYGSLLEVRQCLAIYQDMRNAGYKP).

This sequence belongs to the PPR family. P subfamily.

The protein resides in the plastid. It localises to the chloroplast. The protein is Pentatricopeptide repeat-containing protein At5g02830, chloroplastic of Arabidopsis thaliana (Mouse-ear cress).